We begin with the raw amino-acid sequence, 287 residues long: Hydroxysteroid 11-beta-dehydrogenase 1-like protein (287 aa).

The N-terminal stretch at 1–15 (MKVLLLTGLGALFFA) is a signal peptide. NADP(+) contacts are provided by residues 36-62 (GASA…TAHT), 87-88 (DM), and 114-116 (NHI). Residue S165 coordinates substrate. The active-site Proton acceptor is the Y178. NADP(+)-binding positions include 178 to 182 (YSAAK) and 211 to 217 (GLRDRAS).

The protein belongs to the short-chain dehydrogenases/reductases (SDR) family.

Its subcellular location is the secreted. The enzyme catalyses cortisone + NADPH + H(+) = cortisol + NADP(+). Functionally, unidirectional NADP(+)-dependent cortisol dehydrogenase (in vitro). This Macaca fascicularis (Crab-eating macaque) protein is Hydroxysteroid 11-beta-dehydrogenase 1-like protein (HSD11B1L).